Consider the following 206-residue polypeptide: Guanylate kinase (206 aa).

The Guanylate kinase-like domain maps to 6–184; the sequence is GTLYIISAPS…ALDDLKAIFR (179 aa). 13–20 contacts ATP; it reads APSGAGKS.

Belongs to the guanylate kinase family.

It is found in the cytoplasm. The catalysed reaction is GMP + ATP = GDP + ADP. Essential for recycling GMP and indirectly, cGMP. The protein is Guanylate kinase of Pseudomonas fluorescens (strain Pf0-1).